The following is a 434-amino-acid chain: 3-phosphoshikimate 1-carboxyvinyltransferase (434 aa).

Lysine 22, serine 23, and arginine 27 together coordinate 3-phosphoshikimate. Phosphoenolpyruvate is bound at residue lysine 22. The phosphoenolpyruvate site is built by glycine 93 and arginine 121. Residues serine 168, serine 169, glutamine 170, serine 199, aspartate 320, and lysine 347 each coordinate 3-phosphoshikimate. Phosphoenolpyruvate is bound at residue glutamine 170. Residue aspartate 320 is the Proton acceptor of the active site. Phosphoenolpyruvate-binding residues include arginine 351, arginine 394, and lysine 419.

Belongs to the EPSP synthase family. Monomer.

The protein resides in the cytoplasm. It carries out the reaction 3-phosphoshikimate + phosphoenolpyruvate = 5-O-(1-carboxyvinyl)-3-phosphoshikimate + phosphate. It functions in the pathway metabolic intermediate biosynthesis; chorismate biosynthesis; chorismate from D-erythrose 4-phosphate and phosphoenolpyruvate: step 6/7. Catalyzes the transfer of the enolpyruvyl moiety of phosphoenolpyruvate (PEP) to the 5-hydroxyl of shikimate-3-phosphate (S3P) to produce enolpyruvyl shikimate-3-phosphate and inorganic phosphate. This is 3-phosphoshikimate 1-carboxyvinyltransferase from Burkholderia orbicola (strain MC0-3).